The following is a 281-amino-acid chain: uncharacterized protein (281 aa).

It is found in the plastid. It localises to the chloroplast. This is an uncharacterized protein from Euglena gracilis.